Here is a 90-residue protein sequence, read N- to C-terminus: Small ribosomal subunit protein uS15c (90 aa).

It belongs to the universal ribosomal protein uS15 family. Part of the 30S ribosomal subunit.

The protein localises to the plastid. It is found in the chloroplast. The sequence is that of Small ribosomal subunit protein uS15c (rps15-A) from Oryza nivara (Indian wild rice).